Reading from the N-terminus, the 605-residue chain is Indole-3-acetic acid-amido synthetase GH3.8 (605 aa).

AMP is bound by residues S115, 342-346 (MYASS), Y365, D421, and R440.

This sequence belongs to the IAA-amido conjugating enzyme family. Expressed in the inner floral organs (lodicules, stamens and carpels) and at lower levels in lemmas and paleas.

In terms of biological role, catalyzes the synthesis of indole-3-acetic acid (IAA)-amino acid conjugates, providing a mechanism for the plant to cope with the presence of excessive free auxin. Produces more IAA-Asp levels than IAA-Ala levels in vitro. May participate in the activation of disease resistance by preventing the accumulation of free IAA, which reduces the expression of a group of auxin-responsive genes encoding expansins that control cell wall loosening and expansion. Contributes to late events in stamen and carpel differentiation, and influences floret fertility. The sequence is that of Indole-3-acetic acid-amido synthetase GH3.8 (GH3.8) from Oryza sativa subsp. indica (Rice).